The chain runs to 502 residues: Protein DETOXIFICATION 55 (502 aa).

The next 12 helical transmembrane spans lie at 30–50 (IWDI…KNMT), 61–81 (LELA…YSVL), 112–132 (IFLL…LAPL), 145–165 (VASL…FLHP), 185–205 (VSVL…SLGV), 207–227 (GVAV…LCYI), 261–283 (VWST…WWWY), 298–318 (VALA…TIPT), 344–364 (ATVA…GTTV), 378–398 (VVLE…LANC), 419–439 (INFY…AFVW), and 447–467 (CYGL…VVYN).

Belongs to the multi antimicrobial extrusion (MATE) (TC 2.A.66.1) family.

The protein resides in the membrane. In Arabidopsis thaliana (Mouse-ear cress), this protein is Protein DETOXIFICATION 55.